The following is a 249-amino-acid chain: Probable transcriptional regulatory protein OTT_1378 (249 aa).

The protein belongs to the TACO1 family.

The protein localises to the cytoplasm. This chain is Probable transcriptional regulatory protein OTT_1378, found in Orientia tsutsugamushi (strain Ikeda) (Rickettsia tsutsugamushi).